The primary structure comprises 209 residues: MKKAIIGRKIGMTQIFDENGKVIPVTVVEAGPCAVLQKKTEEKDGYNAIQVGFEDIREKLANKPKKGHFAKAGVSLKRIVREFRLENIDEYEVGTEIKADVFAAGDKVDVTGVSKGKGFQGTIKRWNFHRGPMAHGSKYHRAVGSMGAASDPSRTFKNKKMPGHMGNKKSTILNIEVVKVMADKNVLLIKGGIPGPNKGYVVIKDTVKA.

The interval G144–M165 is disordered.

It belongs to the universal ribosomal protein uL3 family. Part of the 50S ribosomal subunit. Forms a cluster with proteins L14 and L19.

Functionally, one of the primary rRNA binding proteins, it binds directly near the 3'-end of the 23S rRNA, where it nucleates assembly of the 50S subunit. This chain is Large ribosomal subunit protein uL3, found in Clostridium novyi (strain NT).